Here is an 827-residue protein sequence, read N- to C-terminus: MSEAELEQTPSAGHVQEQPIEEEHEPEQEPTDAYTIGGPPRTPVEDAAAELSASLDVSGSDQSAEQSLDLSGVQAEAAAESEPPAKRQHRDISPISEDSTPASSTSTSSTRSSSSSRYDDVSEAEEAPPEPEPEQPQQQQQEEKKEDGQDQVKSPGPVELEAQEPAQPQKQKEVVDQEIETEDEPSSDTVICVADINPYGSGSNIDDFVMDPDAPPNAIITEVVTIPAPLHLKGTQQLGLPLAAPPPPPPPPAAEQVPETPASPTDDGEEPPAVYLSPYIRSRYMQESTPGLPTRLAPRDPRQRNMPPPAVVLPIQTVLSANVEAISDDSSETSSSDDDEEEEEDEDDALTMEHDNTSRETVITTGDPLMQKIDISENPDKIYFIRREDGTVHRGQVLQSRTTENAAAPDEYYVHYVGLNRRLDGWVGRHRISDNADDLGGITVLPAPPLAPDQPSTSREMLAQQAAAAAAASSERQKRAANKDYYLSYCENSRYDYSDRKMTRYQKRRYDEINHVQKSHAELTATQAALEKEHESITKIKYIDKLQFGNYEIDTWYFSPFPEEYGKARTLYVCEYCLKYMRFRSSYAYHLHECDRRRPPGREIYRKGNISIYEVNGKEESLYCQLLCLMAKLFLDHKVLYFDMDPFLFYILCETDKEGSHIVGYFSKEKKSLENYNVACILVLPPHQRKGFGKLLIAFSYELSRKEGVIGSPEKPLSDLGRLSYRSYWAYTLLELMKTRCAPEQITIKELSEMSGITHDDIIYTLQSMKMIKYWKGQNVICVTSKTIQDHLQLPQFKQPKLTIDTDYLVWSPQTAAAVVRAPGNSG.

4 disordered regions span residues 1-190, 237-276, 288-309, and 324-360; these read MSEA…SDTV, QLGL…AVYL, STPG…MPPP, and EAIS…TSRE. Residues 19-30 are compositionally biased toward acidic residues; the sequence is PIEEEHEPEQEP. Positions 55–69 are enriched in polar residues; that stretch reads LDVSGSDQSAEQSLD. Positions 103 to 116 are enriched in low complexity; sequence SSTSTSSTRSSSSS. Over residues 121–133 the composition is skewed to acidic residues; that stretch reads VSEAEEAPPEPEP. Residues 141 to 150 are compositionally biased toward basic and acidic residues; that stretch reads QEEKKEDGQD. Over residues 176–186 the composition is skewed to acidic residues; the sequence is DQEIETEDEPS. The span at 243 to 253 shows a compositional bias: pro residues; it reads AAPPPPPPPPA. A compositionally biased stretch (acidic residues) spans 326–350; sequence ISDDSSETSSSDDDEEEEEDEDDAL. K372 is covalently cross-linked (Glycyl lysine isopeptide (Lys-Gly) (interchain with G-Cter in ubiquitin)). Positions 382 to 433 constitute a Tudor-knot domain; it reads IYFIRREDGTVHRGQVLQSRTTENAAAPDEYYVHYVGLNRRLDGWVGRHRIS. Glycyl lysine isopeptide (Lys-Gly) (interchain with G-Cter in ubiquitin) cross-links involve residues K483, K532, and K539. In terms of domain architecture, MYST-type HAT spans 538-813; it reads TKIKYIDKLQ…IDTDYLVWSP (276 aa). The segment at 571–596 adopts a C2HC MYST-type zinc-finger fold; sequence LYVCEYCLKYMRFRSSYAYHLHECDR. C574, C577, H590, and C594 together coordinate Zn(2+). K638 is subject to N6-acetyllysine; by autocatalysis. Positions 681, 689, 690, 691, 693, and 694 each coordinate acetyl-CoA. E714 (proton donor/acceptor) is an active-site residue. K715 is covalently cross-linked (Glycyl lysine isopeptide (Lys-Gly) (interchain with G-Cter in ubiquitin)). 2 residues coordinate acetyl-CoA: S718 and S727. K749 participates in a covalent cross-link: Glycyl lysine isopeptide (Lys-Gly) (interchain with G-Cter in ubiquitin). An acetyl-CoA-binding site is contributed by Y774. Residues K776, K798, and K801 each participate in a glycyl lysine isopeptide (Lys-Gly) (interchain with G-Cter in ubiquitin) cross-link. K798 contacts acetyl-CoA.

This sequence belongs to the MYST (SAS/MOZ) family. Component of the male-specific lethal (MSL) histone acetyltransferase complex, composed of mof, mle, msl-1, msl-2 and msl-3 proteins, as well as roX1 and roX2 non-coding RNAs. Component of a maternal MSL subcomplex composed of mof, msl-1 and msl-3. Component of the non-specific lethal (NLS) histone acetyltransferase complex at least composed of mof, nls1, dgt1/NSL2, Rcd1/NSL3, Rcd5/MCRS2, MBD-R2 and wds. In males, interacts with nucleoporin Mgtor. Autoacetylation at Lys-638 is required for binding histone H4 with high affinity and for proper function. In terms of processing, ubiquitinated by msl-2.

It localises to the nucleus. Its subcellular location is the chromosome. It catalyses the reaction L-lysyl-[histone] + acetyl-CoA = N(6)-acetyl-L-lysyl-[histone] + CoA + H(+). Functionally, histone acetyltransferase that catalyzes the formation of the majority of histone H4 acetylation at 'Lys-16' (H4K16ac), an epigenetic mark that prevents chromatin compaction and constitutes the only acetylation mark intergenerationally transmitted. Catalytic component of the male-specific lethal (MSL) complex, a multiprotein complex essential for elevating transcription of the single X chromosome in the male (X chromosome dosage compensation). The MSL complex specifically associates with the single X chromosome in males and mediates formation of H4K16ac, promoting a two-fold activation of X chromosome. Dosage compensation ensures that males with a single X chromosome have the same amount of most X-linked gene products as females with two X chromosomes. In oocytes, mof is also part of a maternal MSL subcomplex that mediates H4K16ac deposition for intergenerational transmission: H4K16ac prepares the chromatin landscape for establishment of nucleosome accessibility and poises genes for future activation. H4K16ac constitutes the only acetylation mark maintained from oocytes to fertilized embryos. Mof also constitutes the catalytic component of the non-specific lethal (NLS) complex, which promotes expression of housekeeping genes on X chromosome and autosomes. The NSL complex promotes strong expression of housekeeping genes compared to the two-fold expression mediated by the MSL complex on X chromosome, suggesting that the activation potential of mof is constrained in the context of dosage compensation. This is Histone acetyltransferase MOF from Drosophila melanogaster (Fruit fly).